The following is a 143-amino-acid chain: Large ribosomal subunit protein uL11 (143 aa).

It belongs to the universal ribosomal protein uL11 family. As to quaternary structure, part of the ribosomal stalk of the 50S ribosomal subunit. Interacts with L10 and the large rRNA to form the base of the stalk. L10 forms an elongated spine to which L12 dimers bind in a sequential fashion forming a multimeric L10(L12)X complex. One or more lysine residues are methylated.

Forms part of the ribosomal stalk which helps the ribosome interact with GTP-bound translation factors. This is Large ribosomal subunit protein uL11 from Burkholderia mallei (strain NCTC 10247).